Reading from the N-terminus, the 194-residue chain is Probable transcription factor At4g00130 (194 aa).

It belongs to the GeBP family.

This Arabidopsis thaliana (Mouse-ear cress) protein is Probable transcription factor At4g00130.